The chain runs to 518 residues: Bifunctional purine biosynthesis protein PurH (518 aa).

Positions 1–146 (MSPIALLSVS…KNHQDVLVVT (146 aa)) constitute an MGS-like domain.

This sequence belongs to the PurH family.

It catalyses the reaction (6R)-10-formyltetrahydrofolate + 5-amino-1-(5-phospho-beta-D-ribosyl)imidazole-4-carboxamide = 5-formamido-1-(5-phospho-D-ribosyl)imidazole-4-carboxamide + (6S)-5,6,7,8-tetrahydrofolate. The enzyme catalyses IMP + H2O = 5-formamido-1-(5-phospho-D-ribosyl)imidazole-4-carboxamide. It participates in purine metabolism; IMP biosynthesis via de novo pathway; 5-formamido-1-(5-phospho-D-ribosyl)imidazole-4-carboxamide from 5-amino-1-(5-phospho-D-ribosyl)imidazole-4-carboxamide (10-formyl THF route): step 1/1. The protein operates within purine metabolism; IMP biosynthesis via de novo pathway; IMP from 5-formamido-1-(5-phospho-D-ribosyl)imidazole-4-carboxamide: step 1/1. This Prochlorococcus marinus (strain NATL1A) protein is Bifunctional purine biosynthesis protein PurH.